Reading from the N-terminus, the 640-residue chain is MDGFEFFSGRSDVVAMICDDRLLDLSESIPSGKVPEPIELDSPRGLDILRHSCAHVLAQAVQSIYGDAKLGIGPFTENGFYYDFSVNEPFSSDSLRVIEDKMREIVHSDQKFVRKVVDRQSAHSQFRDEPFKLEIINATDDTLSIYYNIDADSGSVRWMDFCRGPHLPSTRFIGDAFALTHVSSVYWRGNSDNPQMQRVYGTAWGSAKDLKGYLDRVELAKLVDHRKLGKELDLFSLPDEIGPGLALFHVKGGIIRSEMEQYARLRHLEEGYNFVYSPHITKRDLFERSGHLQWYGQSMFPPMRLDKDSCSQGFDYYLKPMNCPFHSLVFSSQPRSYRQLPLRLAEFGTVYRYEQSGAIHGLARVRGLTQDDAHIYATRESFEDEVSKALQFTISLLGDYGLDQFYIEISTRDASGKFLGSDEDWAYATHILQKVAQDSGLQTRDDPGGAAFYGPKISVQAKDAIGRYWQMSTIQLDFNLPERFGLFYTDRAGERKRPIMVHRALFGSFERFFAVLTEHYAGAFPPWLSPEQVVALPVTSAHIPYLEEFVSRFSSRLIRARVDYMQDRLPKKIRSYVKEKIPFVLVAGDRDLTNRTVAIRFRDGTQISDLPIQKCFDGICASIDRKKQIQTRIDFDSVLE.

Residues 224-525 form a catalytic region; that stretch reads DHRKLGKELD…LTEHYAGAFP (302 aa). 3 residues coordinate Zn(2+): cysteine 323, histidine 374, and histidine 502.

This sequence belongs to the class-II aminoacyl-tRNA synthetase family. Homodimer. Zn(2+) is required as a cofactor.

The protein resides in the cytoplasm. It carries out the reaction tRNA(Thr) + L-threonine + ATP = L-threonyl-tRNA(Thr) + AMP + diphosphate + H(+). Functionally, catalyzes the attachment of threonine to tRNA(Thr) in a two-step reaction: L-threonine is first activated by ATP to form Thr-AMP and then transferred to the acceptor end of tRNA(Thr). Also edits incorrectly charged L-seryl-tRNA(Thr). The protein is Threonine--tRNA ligase of Tropheryma whipplei (strain TW08/27) (Whipple's bacillus).